A 270-amino-acid polypeptide reads, in one-letter code: Ribosomal RNA-processing protein 7 homolog (270 aa).

The stretch at 233-268 (TFQIKKNRQEKAQELLKKFEEDRKRITQLKQARNFK) forms a coiled coil.

The protein belongs to the RRP7 family.

The protein is Ribosomal RNA-processing protein 7 homolog of Caenorhabditis elegans.